We begin with the raw amino-acid sequence, 308 residues long: Protein FdhE homolog (308 aa).

The protein belongs to the FdhE family.

The protein resides in the cytoplasm. In terms of biological role, necessary for formate dehydrogenase activity. The sequence is that of Protein FdhE homolog from Edwardsiella ictaluri (strain 93-146).